The following is a 1308-amino-acid chain: Cadherin-related family member 2 (1308 aa).

Positions 1-20 (MAWLWLLCALLPAFMVSVTA) are cleaved as a signal peptide. Topologically, residues 21 to 1152 (NSPPSFGVNM…EPDQQKLLTS (1132 aa)) are extracellular. Cadherin domains are found at residues 33–124 (VTLP…IPVF), 125–241 (LNTE…DPRF), 242–353 (IREF…KPEF), 368–480 (AQVN…RPVF), 481–586 (SQSL…PPVV), 586–695 (VRGS…LPVF), 695–807 (FNQS…PPTL), 809–927 (AASL…APYF), and 929–1051 (PNNQ…RLQF). A helical membrane pass occupies residues 1153-1173 (VIIGLVVSLVLVLVILITALV). Residues 1174 to 1308 (CLRKSYHRKL…TNPGLDTTDL (135 aa)) are Cytoplasmic-facing. The segment at 1178–1308 (SYHRKLRAMK…TNPGLDTTDL (131 aa)) is mediates interaction with USH1C and MYO7B and is required for proper localization to microvilli tips and function in microvilli organization. A Phosphoserine modification is found at serine 1245. Residues 1251 to 1308 (VDLDMDSKEFKRKDLPGDPPEPDPEPLTAVLSGRSAGASEQQKKNLSFTNPGLDTTDL) form a disordered region. The segment covering 1255–1266 (MDSKEFKRKDLP) has biased composition (basic and acidic residues). Polar residues predominate over residues 1288-1308 (ASEQQKKNLSFTNPGLDTTDL). Phosphoserine is present on serine 1297.

Part of the IMAC/intermicrovillar adhesion complex/intermicrovillar tip-link complex composed of ANKS4B, MYO7B, USH1C, CDHR2 and CDHR5. Interacts with MAST2. Interacts (via cytoplasmic domain) with USH1C and MYO7B; required for proper localization of CDHR2 to microvilli tips and its function in brush border differentiation.

It is found in the apical cell membrane. Its subcellular location is the cell projection. It localises to the microvillus membrane. The protein localises to the cell junction. Intermicrovillar adhesion molecule that forms, via its extracellular domain, calcium-dependent heterophilic complexes with CDHR5 on adjacent microvilli. Thereby, controls the packing of microvilli at the apical membrane of epithelial cells. Through its cytoplasmic domain, interacts with microvillus cytoplasmic proteins to form the intermicrovillar adhesion complex/IMAC. This complex plays a central role in microvilli and epithelial brush border differentiation. May also play a role in cell-cell adhesion and contact inhibition in epithelial cells. The sequence is that of Cadherin-related family member 2 from Mus musculus (Mouse).